The sequence spans 386 residues: Diels-Alderase phm7 (386 aa).

A beta-sandwich motif region spans residues M1–W223. Substrate is bound by residues E51, N84, and K356. The segment at W223–P386 is beta-barrel motif.

The protein belongs to the Diels-Alderase family.

It participates in secondary metabolite biosynthesis. Its activity is regulated as follows. 3-aminomethyl-p-menthane which is similar to the phomasetin substructure, dose-dependently inhibits phm7 activity in vitro and production of phomasetin in the fungus. In terms of biological role, diels-Alderase; part of the gene cluster that mediates the biosynthesis of the trans-fused decalin-containing tetramic acid phomasetin, the stereochemical opposite of the HIV-1 integrase inhibitor equisetin. The PKS module of phm1 together with the enoylreductase phm4 catalyze the formation of the polyketide unit which is then conjugated to L-serine by the condensation domain of the phm1 NRPS module. Activity of the Dieckmann cyclase domain (RED) of phm1 results in release of the Dieckmann product intermediate. The Diels-Alderase phm7 then uses the Dieckmann product of phm1 as substrate and catalyzes the Diels-Alder cycloaddition to form the decalin ring of N-desmethylphomasetin. N-desmethylphomasetin is further methylated to phomasetin by the methyltransferase phm5. This is Diels-Alderase phm7 from Pyrenochaetopsis sp.